Here is a 440-residue protein sequence, read N- to C-terminus: Beta-1,3-galactosyl-O-glycosyl-glycoprotein beta-1,6-N-acetylglucosaminyltransferase 3 (440 aa).

The Cytoplasmic portion of the chain corresponds to 1–12 (MKMTGWKKKLCR). Residues 13-30 (GHHLWALGCYMLLAVVAL) form a helical; Signal-anchor for type II membrane protein membrane-spanning segment. Residues 31 to 440 (RLSLRLKCDV…RHKAIYGTEL (410 aa)) are Lumenal-facing. 4 disulfides stabilise this stretch: C73-C230, C164-C384, C185-C212, and C393-C425. N108 carries an N-linked (GlcNAc...) asparagine glycan.

Belongs to the glycosyltransferase 14 family. Post-translationally, N-glycosylated.

It localises to the golgi apparatus membrane. The catalysed reaction is a 3-O-[beta-D-galactosyl-(1-&gt;3)-N-acetyl-alpha-D-galactosaminyl]-L-seryl-[protein] + UDP-N-acetyl-alpha-D-glucosamine = 3-O-{beta-D-galactosyl-(1-&gt;3)-[N-acetyl-beta-D-glucosaminyl-(1-&gt;6)]-N-acetyl-alpha-D-galactosaminyl}-L-seryl-[protein] + UDP + H(+). The enzyme catalyses a 3-O-[beta-D-galactosyl-(1-&gt;3)-N-acetyl-alpha-D-galactosaminyl]-L-threonyl-[protein] + UDP-N-acetyl-alpha-D-glucosamine = a 3-O-{beta-D-galactosyl-(1-&gt;3)-[N-acetyl-beta-D-glucosaminyl-(1-&gt;6)]-N-acetyl-alpha-D-galactosaminyl}-L-threonyl-[protein] + UDP + H(+). It carries out the reaction a beta-D-Gal-(1-&gt;4)-beta-D-GlcNAc-(1-&gt;3)-beta-D-Gal-(1-&gt;4)-beta-D-GlcNAc derivative + UDP-N-acetyl-alpha-D-glucosamine = a beta-D-Gal-(1-&gt;4)-beta-D-GlcNAc-(1-&gt;3)-[beta-D-GlcNAc-(1-&gt;6)]-beta-D-Gal-(1-&gt;4)-N-acetyl-beta-D-glucosaminyl derivative + UDP + H(+). It catalyses the reaction 3-O-[N-acetyl-beta-D-glucosaminyl-(1-&gt;3)-N-acetyl-alpha-D-galactosaminyl]-L-seryl-[protein] + UDP-N-acetyl-alpha-D-glucosamine = 3-O-[N-acetyl-beta-D-glucosaminyl-(1-&gt;3)-[N-acetyl-beta-D-glucosaminyl-(1-&gt;6)]-N-acetyl-alpha-D-galactosaminyl]-L-seryl-[protein] + UDP + H(+). The catalysed reaction is a 3-O-[N-acetyl-beta-D-glucosaminyl-(1-&gt;3)-N-acetyl-alpha-D-galactosaminyl]-L-threonyl-[protein] + UDP-N-acetyl-alpha-D-glucosamine = 3-O-[N-acetyl-beta-D-glucosaminyl-(1-&gt;3)-[N-acetyl-beta-D-glucosaminyl-(1-&gt;6)]-N-acetyl-alpha-D-galactosaminyl]-L-threonyl-[protein] + UDP + H(+). Its pathway is protein modification; protein glycosylation. In terms of biological role, glycosyltransferase that can synthesize all known mucin beta 6 N-acetylglucosaminides. Mediates core 2 and core 4 O-glycan branching, 2 important steps in mucin-type biosynthesis. Also has I-branching enzyme activity by converting linear into branched poly-N-acetyllactosaminoglycans, leading to introduce the blood group I antigen during embryonic development. In Ovis aries (Sheep), this protein is Beta-1,3-galactosyl-O-glycosyl-glycoprotein beta-1,6-N-acetylglucosaminyltransferase 3 (GCNT3).